Consider the following 177-residue polypeptide: Large ribosomal subunit protein uL6 (177 aa).

Belongs to the universal ribosomal protein uL6 family. Part of the 50S ribosomal subunit.

Its function is as follows. This protein binds to the 23S rRNA, and is important in its secondary structure. It is located near the subunit interface in the base of the L7/L12 stalk, and near the tRNA binding site of the peptidyltransferase center. The protein is Large ribosomal subunit protein uL6 of Cereibacter sphaeroides (strain ATCC 17025 / ATH 2.4.3) (Rhodobacter sphaeroides).